Consider the following 289-residue polypeptide: Polyketide biosynthesis malonyl CoA-acyl carrier protein transacylase BaeC (289 aa).

Active-site residues include Ser87 and His193.

Belongs to the FabD family.

It is found in the cytoplasm. It carries out the reaction holo-[ACP] + malonyl-CoA = malonyl-[ACP] + CoA. It participates in antibiotic biosynthesis; bacillaene biosynthesis. Its function is as follows. Involved in some intermediate steps for the synthesis of the antibiotic polyketide bacillaene which is involved in secondary metabolism. It catalyzes the transfer of the malonyl-CoA group to the acyl-carrier-protein AcpK (Mal-AcpK). This Bacillus velezensis (strain DSM 23117 / BGSC 10A6 / LMG 26770 / FZB42) (Bacillus amyloliquefaciens subsp. plantarum) protein is Polyketide biosynthesis malonyl CoA-acyl carrier protein transacylase BaeC (baeC).